Here is a 145-residue protein sequence, read N- to C-terminus: Basic phospholipase A2 PC17 (145 aa).

Residues 1-21 (MYPAHLLVLLAVCVSLLGASA) form the signal peptide. Residues 22 to 27 (ISNQPR) constitute a propeptide that is removed on maturation. Intrachain disulfides connect C38–C98, C54–C144, C56–C72, C71–C125, C78–C118, C87–C111, and C105–C116. Residues Y55, G57, and G59 each contribute to the Ca(2+) site. H75 is an active-site residue. D76 serves as a coordination point for Ca(2+). The active site involves D119.

It belongs to the phospholipase A2 family. Group I subfamily. D49 sub-subfamily. Ca(2+) is required as a cofactor. In terms of tissue distribution, expressed by the venom gland.

The protein resides in the secreted. It catalyses the reaction a 1,2-diacyl-sn-glycero-3-phosphocholine + H2O = a 1-acyl-sn-glycero-3-phosphocholine + a fatty acid + H(+). Its function is as follows. Snake venom phospholipase A2 (PLA2) that inhibits neuromuscular transmission by blocking acetylcholine release from the nerve termini. PLA2 catalyzes the calcium-dependent hydrolysis of the 2-acyl groups in 3-sn-phosphoglycerides. In Laticauda colubrina (Yellow-lipped sea krait), this protein is Basic phospholipase A2 PC17.